Consider the following 143-residue polypeptide: Transcriptional regulator MraZ (143 aa).

2 SpoVT-AbrB domains span residues 5 to 47 (EYSH…PMPV) and 76 to 119 (AMEA…SDEN).

The protein belongs to the MraZ family. In terms of assembly, forms oligomers.

It is found in the cytoplasm. The protein resides in the nucleoid. This Leuconostoc citreum (strain KM20) protein is Transcriptional regulator MraZ.